Here is a 257-residue protein sequence, read N- to C-terminus: NAD-capped RNA hydrolase NudC (257 aa).

Arg69 is a binding site for substrate. Zn(2+) is bound by residues Cys98 and Cys101. Glu111 contacts substrate. Residues Cys116 and Cys119 each coordinate Zn(2+). Tyr124 serves as a coordination point for substrate. The Nudix hydrolase domain maps to 125–248; it reads PQIAPCIIVA…TVARRLIEDT (124 aa). Positions 158, 174, and 178 each coordinate a divalent metal cation. The Nudix box motif lies at 159–180; the sequence is GFVEVGETLEQAVAREVMEESG. Substrate is bound at residue 192–199; sequence QPWPFPQS. An a divalent metal cation-binding site is contributed by Glu219. Ala241 is a binding site for substrate.

This sequence belongs to the Nudix hydrolase family. NudC subfamily. Homodimer. The cofactor is Mg(2+). Requires Mn(2+) as cofactor. Zn(2+) is required as a cofactor.

The enzyme catalyses a 5'-end NAD(+)-phospho-ribonucleoside in mRNA + H2O = a 5'-end phospho-adenosine-phospho-ribonucleoside in mRNA + beta-nicotinamide D-ribonucleotide + 2 H(+). The catalysed reaction is NAD(+) + H2O = beta-nicotinamide D-ribonucleotide + AMP + 2 H(+). It catalyses the reaction NADH + H2O = reduced beta-nicotinamide D-ribonucleotide + AMP + 2 H(+). MRNA decapping enzyme that specifically removes the nicotinamide adenine dinucleotide (NAD) cap from a subset of mRNAs by hydrolyzing the diphosphate linkage to produce nicotinamide mononucleotide (NMN) and 5' monophosphate mRNA. The NAD-cap is present at the 5'-end of some mRNAs and stabilizes RNA against 5'-processing. Has preference for mRNAs with a 5'-end purine. Catalyzes the hydrolysis of a broad range of dinucleotide pyrophosphates. The sequence is that of NAD-capped RNA hydrolase NudC from Salmonella choleraesuis (strain SC-B67).